A 195-amino-acid polypeptide reads, in one-letter code: Peptidyl-tRNA hydrolase (195 aa).

Y17 contacts tRNA. Residue H22 is the Proton acceptor of the active site. TRNA-binding residues include Y68, N70, and N116.

This sequence belongs to the PTH family. As to quaternary structure, monomer.

It localises to the cytoplasm. The enzyme catalyses an N-acyl-L-alpha-aminoacyl-tRNA + H2O = an N-acyl-L-amino acid + a tRNA + H(+). Hydrolyzes ribosome-free peptidyl-tRNAs (with 1 or more amino acids incorporated), which drop off the ribosome during protein synthesis, or as a result of ribosome stalling. Functionally, catalyzes the release of premature peptidyl moieties from peptidyl-tRNA molecules trapped in stalled 50S ribosomal subunits, and thus maintains levels of free tRNAs and 50S ribosomes. In Shewanella sp. (strain MR-4), this protein is Peptidyl-tRNA hydrolase.